The following is a 135-amino-acid chain: MGAIVLVAIMALVASSSAFSDDEQNMMNAEGEKGIRSYSAADDVSDMIESLFVNSGNRNLVLMMLSGRPQPNARCVEDGQPCGFLVSDKGCCLPNYCSQYARGKCICVPKGQPCGLLHFCCLGLTCDGSFQGTCN.

Positions 1 to 18 (MGAIVLVAIMALVASSSA) are cleaved as a signal peptide. A propeptide spanning residues 19 to 72 (FSDDEQNMMNAEGEKGIRSYSAADDVSDMIESLFVNSGNRNLVLMMLSGRPQPN) is cleaved from the precursor. 6 disulfides stabilise this stretch: C75–C92, C82–C97, C91–C105, C107–C121, C114–C126, and C120–C134.

Belongs to the urticatoxin-2 family. Expressed in trichomes, that are stiff epidermal hairs located on the surface of petioles and leaves.

Its subcellular location is the secreted. In terms of biological role, plant defense neurotoxin that causes pain and systemic symptoms in mammals via modulation of voltage-gated sodium channels (Nav). Potent modulator of human Nav1.5/SCN5A (EC(50)=55 nM), Nav1.6/SCN8A (EC(50)=0.86 nM), and Nav1.7/SCN9A (EC(50)=208 nM), where it shifts the activation threshold to more negative potentials and delays fast inactivation. Also shifts the voltage-dependence of steady-state fast inactivation of Nav1.6/SCN8A, but not that of Nav1.5/SCN5A or Nav1.7/SCN9A. On Nav1.7/SCN9A, principally acts by binding to extracellular loops of domain IV (Nav site 3). In vivo, intraplantar injection into mice causes numerous dose-dependent, immediate, and long-lasting spontaneous pain behaviors, while no swelling is observed in the injected paw. At the highest doses tested, systemic symptoms including hypokinesia and hypersalivation are observed. The polypeptide is Beta/delta-urticatoxin-Ui2a (Urtica incisa (Scrub nettle)).